Reading from the N-terminus, the 150-residue chain is MAKIILTHEVTGLGAAGDVVEVKNGYARNYLLPRGFALTWTKGGEKQVESIKAARAAREHASVEAAQAQAAKLSSTPVRLEVKAGDSGRLFGTVKAEDVAKAVEAAGLGSIDKRKVEIPAHIKSVGKYQANVRLHEDVSAVIDLNVVAGK.

The protein belongs to the bacterial ribosomal protein bL9 family.

Functionally, binds to the 23S rRNA. The sequence is that of Large ribosomal subunit protein bL9 from Renibacterium salmoninarum (strain ATCC 33209 / DSM 20767 / JCM 11484 / NBRC 15589 / NCIMB 2235).